Consider the following 737-residue polypeptide: Protein OPG064 (737 aa).

An N-acetylmethionine; by host modification is found at Met1. A disulfide bond links Cys496 and Cys535.

This sequence belongs to the orthopoxvirus OPG064 family. As to quaternary structure, interacts with host KLC2; this interaction promotes IEV trafficking by engaging the host kinesin-1 complex. Interacts with protein OPG056/F12. Post-translationally, N-acetylated on initiator methionine by host.

Functionally, plays a role in intracellular enveloped virus (IEV) transport to the cell surface on microtubules. Together with protein OPG056/F12, forms a complex that interacts with host KLC2 (kinesin light chain isoform 2) to engage the kinesin-1 complex and thereby promote IEV trafficking. In Bos taurus (Bovine), this protein is Protein OPG064 (OPG064).